The following is a 252-amino-acid chain: MAQLCGLRRSRAFLALLGSLLLSGVLAADRERSIHDFCLVSKVVGRCRASMPRWWYNVTDGSCQLFVYGGCDGNSNNYLTKEECLKKCATVTENATGDLATSRNAADSSVPSAPRRQDSEDHSSDMFNYEEYCTANAVTGPCRASFPRWYFDVERNSCNNFIYGGCRGNKNSYRSEEACMLRCFRQQENPPLPLGSKVVVLAGLFVMVLILFLGASMVYLIRVARRNQERALRTVWSSGDDKEQLVKNTYVL.

An N-terminal signal peptide occupies residues 1–27 (MAQLCGLRRSRAFLALLGSLLLSGVLA). Residues 28–197 (ADRERSIHDF…ENPPLPLGSK (170 aa)) lie on the Extracellular side of the membrane. Residues 38-88 (CLVSKVVGRCRASMPRWWYNVTDGSCQLFVYGGCDGNSNNYLTKEECLKKC) form the BPTI/Kunitz inhibitor 1 domain. 3 cysteine pairs are disulfide-bonded: Cys-38–Cys-88, Cys-47–Cys-71, and Cys-63–Cys-84. A glycan (N-linked (GlcNAc...) asparagine) is linked at Asn-57. N-linked (GlcNAc...) asparagine glycosylation occurs at Asn-94. Polar residues predominate over residues 100–111 (ATSRNAADSSVP). The interval 100 to 122 (ATSRNAADSSVPSAPRRQDSEDH) is disordered. The 51-residue stretch at 133-183 (CTANAVTGPCRASFPRWYFDVERNSCNNFIYGGCRGNKNSYRSEEACMLRC) folds into the BPTI/Kunitz inhibitor 2 domain. Cystine bridges form between Cys-133-Cys-183, Cys-142-Cys-166, and Cys-158-Cys-179. The chain crosses the membrane as a helical span at residues 198-218 (VVVLAGLFVMVLILFLGASMV). At 219-252 (YLIRVARRNQERALRTVWSSGDDKEQLVKNTYVL) the chain is on the cytoplasmic side.

In terms of assembly, interacts with TMPRSS13; the interaction promotes the phosphorylation and cell membrane localization of TMPRSS13. As to expression, expressed in placenta, kidney, pancreas, prostate, testis, thymus, and trachea.

It is found in the cell membrane. The protein localises to the cytoplasm. Functionally, inhibitor of HGFAC. Also inhibits plasmin, and plasma and tissue kallikrein. Inhibits serine protease activity of TMPRSS13. Inhibits serine protease activity of ST14/matriptase and PRSS8/prostasin in vitro. The sequence is that of Kunitz-type protease inhibitor 2 (SPINT2) from Homo sapiens (Human).